The following is a 258-amino-acid chain: Enoyl-[acyl-carrier-protein] reductase [NADH] FabI (258 aa).

NAD(+) contacts are provided by residues Gly14, Ser20–Ile21, Asp67–Val68, and Ile95. Ala98 lines the substrate pocket. Catalysis depends on proton acceptor residues Tyr148 and Tyr158. NAD(+) contacts are provided by residues Lys165 and Ile194–Ser198.

The protein belongs to the short-chain dehydrogenases/reductases (SDR) family. FabI subfamily. Homotetramer.

It carries out the reaction a 2,3-saturated acyl-[ACP] + NAD(+) = a (2E)-enoyl-[ACP] + NADH + H(+). The enzyme catalyses (2E)-butenoyl-[ACP] + NADH + H(+) = butanoyl-[ACP] + NAD(+). It participates in lipid metabolism; fatty acid biosynthesis. Its activity is regulated as follows. Inhibited by triclosan and acrylamide. Functionally, catalyzes the reduction of a carbon-carbon double bond in an enoyl moiety that is covalently linked to an acyl carrier protein (ACP). Involved in the elongation cycle of fatty acid which are used in the lipid metabolism. This Bacillus subtilis (strain 168) protein is Enoyl-[acyl-carrier-protein] reductase [NADH] FabI (fabI).